Reading from the N-terminus, the 260-residue chain is Thrombin-like enzyme gloshedobin (260 aa).

A signal peptide spans 1–18 (MVLIRVQANLLILQLSYA). The propeptide occupies 19–24 (QKSSEL). The 228-residue stretch at 25–252 (IIGGDECNIN…TEWIQSIIAG (228 aa)) folds into the Peptidase S1 domain. 6 cysteine pairs are disulfide-bonded: Cys-31-Cys-165, Cys-52-Cys-68, Cys-100-Cys-258, Cys-144-Cys-212, Cys-176-Cys-191, and Cys-202-Cys-227. Active-site charge relay system residues include His-67 and Asp-112. 2 N-linked (GlcNAc...) asparagine glycosylation sites follow: Asn-123 and Asn-124. The active-site Charge relay system is the Ser-206.

Belongs to the peptidase S1 family. Snake venom subfamily. Monomer. As to expression, expressed by the venom gland.

It localises to the secreted. Completely inhibited by PMSF, and N-tosyl-Lphenylalanine chloromethyl ketone (TPCK) and poorly inhibited by benzamidine and derivates. Not inhibited by EDTA, heparin and hirudin. Its function is as follows. Thrombin-like snake venom serine protease. The recombinant form clots fibrinogen by cleaving fibrinogen Aalpha chain (FGA), and slowly Bbeta chain (FGB). Has amidolytic activities. In Gloydius shedaoensis (Shedao island pit viper), this protein is Thrombin-like enzyme gloshedobin.